The chain runs to 689 residues: Glycine--tRNA ligase beta subunit (689 aa).

Belongs to the class-II aminoacyl-tRNA synthetase family. Tetramer of two alpha and two beta subunits.

It localises to the cytoplasm. The catalysed reaction is tRNA(Gly) + glycine + ATP = glycyl-tRNA(Gly) + AMP + diphosphate. The protein is Glycine--tRNA ligase beta subunit of Shigella dysenteriae serotype 1 (strain Sd197).